We begin with the raw amino-acid sequence, 564 residues long: DNA ligase B (564 aa).

Residue Lys130 is the N6-AMP-lysine intermediate of the active site.

Belongs to the NAD-dependent DNA ligase family. LigB subfamily.

It catalyses the reaction NAD(+) + (deoxyribonucleotide)n-3'-hydroxyl + 5'-phospho-(deoxyribonucleotide)m = (deoxyribonucleotide)n+m + AMP + beta-nicotinamide D-nucleotide.. Catalyzes the formation of phosphodiester linkages between 5'-phosphoryl and 3'-hydroxyl groups in double-stranded DNA using NAD as a coenzyme and as the energy source for the reaction. The chain is DNA ligase B from Klebsiella pneumoniae subsp. pneumoniae (strain ATCC 700721 / MGH 78578).